A 247-amino-acid chain; its full sequence is Small ribosomal subunit protein uS3 (247 aa).

The region spanning 51–119 is the KH type-2 domain; that stretch reads VAKRDKRPAG…ELHLNIVEIR (69 aa). A compositionally biased stretch (basic and acidic residues) spans 224-233; the sequence is PSAHDRRQQE. A disordered region spans residues 224–247; sequence PSAHDRRQQELQESGGASRPRRDR.

This sequence belongs to the universal ribosomal protein uS3 family. In terms of assembly, part of the 30S ribosomal subunit. Forms a tight complex with proteins S10 and S14.

Binds the lower part of the 30S subunit head. Binds mRNA in the 70S ribosome, positioning it for translation. In Jannaschia sp. (strain CCS1), this protein is Small ribosomal subunit protein uS3.